A 114-amino-acid chain; its full sequence is Iron-sulfur cluster insertion protein ErpA (114 aa).

Positions 42, 106, and 108 each coordinate iron-sulfur cluster.

It belongs to the HesB/IscA family. As to quaternary structure, homodimer. Requires iron-sulfur cluster as cofactor.

Required for insertion of 4Fe-4S clusters for at least IspG. This Haemophilus influenzae (strain PittEE) protein is Iron-sulfur cluster insertion protein ErpA.